A 138-amino-acid polypeptide reads, in one-letter code: uncharacterized protein (138 aa).

A Phosphoserine modification is found at Ser110.

The protein resides in the cytoplasm. It is found in the nucleus. This is an uncharacterized protein from Schizosaccharomyces pombe (strain 972 / ATCC 24843) (Fission yeast).